The following is a 278-amino-acid chain: ABC transporter I family member 11, chloroplastic (278 aa).

The N-terminal 49 residues, 1 to 49, are a transit peptide targeting the chloroplast; the sequence is MAVSTFSSPTPVFGIAEPPASFSSTAIGWKQPLRFRRTKKPRVISCDYS. Positions 51–278 constitute an ABC transporter domain; that stretch reads IEVRDVCYRP…GVLVAERPPL (228 aa). Residue 85–92 coordinates ATP; sequence GKSGSGKT.

It belongs to the ABC transporter superfamily. ABCI family.

The protein resides in the plastid. Its subcellular location is the chloroplast. The chain is ABC transporter I family member 11, chloroplastic (ABCI11) from Arabidopsis thaliana (Mouse-ear cress).